Consider the following 264-residue polypeptide: Thymidylate synthase (264 aa).

Position 21 (Arg-21) interacts with dUMP. His-51 contributes to the (6R)-5,10-methylene-5,6,7,8-tetrahydrofolate binding site. Residue 126–127 (RR) participates in dUMP binding. Catalysis depends on Cys-146, which acts as the Nucleophile. DUMP is bound by residues 166 to 169 (RSAD), Asn-177, and 207 to 209 (HLY). Asp-169 provides a ligand contact to (6R)-5,10-methylene-5,6,7,8-tetrahydrofolate. Ala-263 provides a ligand contact to (6R)-5,10-methylene-5,6,7,8-tetrahydrofolate.

It belongs to the thymidylate synthase family. Bacterial-type ThyA subfamily. In terms of assembly, homodimer.

The protein localises to the cytoplasm. It catalyses the reaction dUMP + (6R)-5,10-methylene-5,6,7,8-tetrahydrofolate = 7,8-dihydrofolate + dTMP. Its pathway is pyrimidine metabolism; dTTP biosynthesis. Its function is as follows. Catalyzes the reductive methylation of 2'-deoxyuridine-5'-monophosphate (dUMP) to 2'-deoxythymidine-5'-monophosphate (dTMP) while utilizing 5,10-methylenetetrahydrofolate (mTHF) as the methyl donor and reductant in the reaction, yielding dihydrofolate (DHF) as a by-product. This enzymatic reaction provides an intracellular de novo source of dTMP, an essential precursor for DNA biosynthesis. The protein is Thymidylate synthase of Methylorubrum extorquens (strain CM4 / NCIMB 13688) (Methylobacterium extorquens).